A 358-amino-acid chain; its full sequence is Protein RecA 2 (358 aa).

Residue 69–76 coordinates ATP; that stretch reads GPESSGKT. Residues 331–358 form a disordered region; it reads GIGKSGAPSPRRRTSPRRPKVAARSAAV. The span at 340–351 shows a compositional bias: basic residues; it reads PRRRTSPRRPKV.

The protein belongs to the RecA family.

Its subcellular location is the cytoplasm. Functionally, can catalyze the hydrolysis of ATP in the presence of single-stranded DNA, the ATP-dependent uptake of single-stranded DNA by duplex DNA, and the ATP-dependent hybridization of homologous single-stranded DNAs. It interacts with LexA causing its activation and leading to its autocatalytic cleavage. The polypeptide is Protein RecA 2 (Myxococcus xanthus).